The sequence spans 591 residues: 5'-nucleotidase domain-containing protein DDB_G0275467 (591 aa).

2 stretches are compositionally biased toward low complexity: residues 38–50 and 68–78; these read STTTTSGIKSYST and QHQQQQPQQHQ. Positions 38 to 88 are disordered; sequence STTTTSGIKSYSTHNRSNNDTHTSKSNTIDQHQQQQPQQHQNNDNKHLFTP. Asp165 serves as the catalytic Nucleophile. 2 residues coordinate Mg(2+): Asp165 and Asp167. Asp167 functions as the Proton donor in the catalytic mechanism. 305-313 is a substrate binding site; it reads TAAVGKVHL. Asp450 serves as a coordination point for Mg(2+).

Belongs to the 5'(3')-deoxyribonucleotidase family. Requires Mg(2+) as cofactor.

The chain is 5'-nucleotidase domain-containing protein DDB_G0275467 from Dictyostelium discoideum (Social amoeba).